A 329-amino-acid polypeptide reads, in one-letter code: Putative helicase 109L (329 aa).

Positions 105–259 (LTLLTQHKSC…LFDMFFGPEM (155 aa)) constitute a Helicase ATP-binding domain. 118 to 125 (CYTGFGKT) contributes to the ATP binding site. The DEAH box signature appears at 212–215 (DEAH).

This sequence belongs to the DEAD box helicase family. DEAH subfamily.

The sequence is that of Putative helicase 109L from Invertebrate iridescent virus 3 (IIV-3).